A 108-amino-acid chain; its full sequence is MIPGEIRVNAALGDIELNAGRETKTIQVANHGDRPVQVGSHYHFYEVNEALRFARKETLGFRLNIPAGMAVRFEPGQSRTVELVAFAGKREIYGFHGKVMGKLESEKK.

The protein belongs to the urease beta subunit family. In terms of assembly, probable heterotrimer of UreA (gamma), UreB (beta) and UreC (alpha) subunits. Three heterotrimers associate to form the active enzyme. The trimeric urease interacts with an accessory complex composed of UreD, UreF and UreG, which is required for the assembly of the nickel containing metallocenter of UreC. The UreE protein may also play a direct role in nickel transfer to the urease apoprotein.

The protein resides in the cytoplasm. It carries out the reaction urea + 2 H2O + H(+) = hydrogencarbonate + 2 NH4(+). It participates in nitrogen metabolism; urea degradation; CO(2) and NH(3) from urea (urease route): step 1/1. This is Urease subunit beta from Proteus mirabilis (strain HI4320).